The primary structure comprises 412 residues: MLPQNKDQVLPQTSVLPGCPPWGFSQLVDSSPHNLQPLSAHQSLRPSHPPFFSTQSHHPSFSPPASPSPGFQFGSCDPNSDFVPHPCSPSLPSSPTFFHQNYLSLPNPRASSPSNHWLYPSPPLTPSFSPSQPQNSSLPHSPCQSPSHPEDLHSSTLTSPGPSPPSQRLHSNRQTWRWHQYRDTGSGSPGVVERCVPSEKDPAQFRDPGALAQALVVQLGHRRIAHDLRLLLLQHLWLGRTGQAPVVEYPICLVCLRPRSPSCPLPKYRTGPRLLAFPQLLPCVEGQESGPLRIGIGFGLRLPQGQARALHLLPEKRPKEVGPQGKDPQACGHPSPAFQPPAAQARADPAPGTPSQTRSFRSAGLQSPNSPRCFSGPPPRAPKQATTSPKPRPCPAPKRPVSLELILQKSSV.

The segment covering 33–45 (HNLQPLSAHQSLR) has biased composition (polar residues). 3 disordered regions span residues 33–75 (HNLQ…QFGS), 123–174 (PLTP…SNRQ), and 318–412 (PKEV…KSSV). 2 stretches are compositionally biased toward low complexity: residues 126–142 (PSFS…PHSP) and 334–350 (PSPA…ADPA). Residues 353–372 (TPSQTRSFRSAGLQSPNSPR) are compositionally biased toward polar residues.

The chain is Proline-rich protein 30 (PRR30) from Macaca fascicularis (Crab-eating macaque).